Here is a 131-residue protein sequence, read N- to C-terminus: Small ribosomal subunit protein uS8 (131 aa).

It belongs to the universal ribosomal protein uS8 family. As to quaternary structure, part of the 30S ribosomal subunit. Contacts proteins S5 and S12.

One of the primary rRNA binding proteins, it binds directly to 16S rRNA central domain where it helps coordinate assembly of the platform of the 30S subunit. The sequence is that of Small ribosomal subunit protein uS8 from Burkholderia mallei (strain NCTC 10247).